The chain runs to 29 residues: Cytochrome b6-f complex subunit 8 (29 aa).

The chain crosses the membrane as a helical span at residues 3-23 (ILTLGWVGLLGLFTYSIAMVV).

This sequence belongs to the PetN family. The 4 large subunits of the cytochrome b6-f complex are cytochrome b6, subunit IV (17 kDa polypeptide, PetD), cytochrome f and the Rieske protein, while the 4 small subunits are PetG, PetL, PetM and PetN. The complex functions as a dimer.

The protein localises to the cellular thylakoid membrane. In terms of biological role, component of the cytochrome b6-f complex, which mediates electron transfer between photosystem II (PSII) and photosystem I (PSI), cyclic electron flow around PSI, and state transitions. The sequence is that of Cytochrome b6-f complex subunit 8 from Cyanothece sp. (strain PCC 7425 / ATCC 29141).